Consider the following 492-residue polypeptide: Acetyl-coenzyme A carboxylase carboxyl transferase subunit beta, chloroplastic (492 aa).

The disordered stretch occupies residues 198 to 219 (STNGSDLTISESSNESESSNES). In terms of domain architecture, CoA carboxyltransferase N-terminal spans 228 to 492 (LWVQCENCYG…FHGRFPLNQN (265 aa)). 4 residues coordinate Zn(2+): Cys232, Cys235, Cys251, and Cys254. A C4-type zinc finger spans residues 232–254 (CENCYGLNYKKFLKSKMYLCEQC).

The protein belongs to the AccD/PCCB family. As to quaternary structure, acetyl-CoA carboxylase is a heterohexamer composed of biotin carboxyl carrier protein, biotin carboxylase and 2 subunits each of ACCase subunit alpha and ACCase plastid-coded subunit beta (accD). Zn(2+) is required as a cofactor.

It is found in the plastid. Its subcellular location is the chloroplast stroma. The enzyme catalyses N(6)-carboxybiotinyl-L-lysyl-[protein] + acetyl-CoA = N(6)-biotinyl-L-lysyl-[protein] + malonyl-CoA. It functions in the pathway lipid metabolism; malonyl-CoA biosynthesis; malonyl-CoA from acetyl-CoA: step 1/1. In terms of biological role, component of the acetyl coenzyme A carboxylase (ACC) complex. Biotin carboxylase (BC) catalyzes the carboxylation of biotin on its carrier protein (BCCP) and then the CO(2) group is transferred by the transcarboxylase to acetyl-CoA to form malonyl-CoA. This is Acetyl-coenzyme A carboxylase carboxyl transferase subunit beta, chloroplastic from Citrus sinensis (Sweet orange).